Here is a 240-residue protein sequence, read N- to C-terminus: Probable transcriptional regulatory protein HP_0162 (240 aa).

The protein belongs to the TACO1 family.

It localises to the cytoplasm. The protein is Probable transcriptional regulatory protein HP_0162 of Helicobacter pylori (strain ATCC 700392 / 26695) (Campylobacter pylori).